The following is an 85-amino-acid chain: Sec-independent protein translocase protein TatA (85 aa).

A helical membrane pass occupies residues 1-21 (MGSFSIWHWLIVLVIIMMVFG). The span at 39 to 51 (FKDGMREGQEDKP) shows a compositional bias: basic and acidic residues. The interval 39–85 (FKDGMREGQEDKPAGSQQPQQTAGQPPRELHDATTIDVEARDKSKQG) is disordered. Residues 53–62 (GSQQPQQTAG) are compositionally biased toward polar residues. Positions 66–85 (RELHDATTIDVEARDKSKQG) are enriched in basic and acidic residues.

This sequence belongs to the TatA/E family. In terms of assembly, the Tat system comprises two distinct complexes: a TatABC complex, containing multiple copies of TatA, TatB and TatC subunits, and a separate TatA complex, containing only TatA subunits. Substrates initially bind to the TatABC complex, which probably triggers association of the separate TatA complex to form the active translocon.

It localises to the cell inner membrane. Part of the twin-arginine translocation (Tat) system that transports large folded proteins containing a characteristic twin-arginine motif in their signal peptide across membranes. TatA could form the protein-conducting channel of the Tat system. This Ralstonia pickettii (strain 12J) protein is Sec-independent protein translocase protein TatA.